The following is a 461-amino-acid chain: Phosphoenolpyruvate carboxylase (461 aa).

The protein belongs to the PEPCase type 2 family. In terms of assembly, homotetramer. Mg(2+) is required as a cofactor.

The enzyme catalyses oxaloacetate + phosphate = phosphoenolpyruvate + hydrogencarbonate. In terms of biological role, catalyzes the irreversible beta-carboxylation of phosphoenolpyruvate (PEP) to form oxaloacetate (OAA), a four-carbon dicarboxylic acid source for the tricarboxylic acid cycle. This chain is Phosphoenolpyruvate carboxylase, found in Pyrobaculum islandicum (strain DSM 4184 / JCM 9189 / GEO3).